A 24-amino-acid chain; its full sequence is Probable caffeoyl-CoA O-methyltransferase (24 aa).

The protein belongs to the class I-like SAM-binding methyltransferase superfamily. Cation-dependent O-methyltransferase family. CCoAMT subfamily. Requires a divalent metal cation as cofactor.

The catalysed reaction is (E)-caffeoyl-CoA + S-adenosyl-L-methionine = (E)-feruloyl-CoA + S-adenosyl-L-homocysteine + H(+). Its pathway is aromatic compound metabolism; phenylpropanoid biosynthesis. Its function is as follows. Methylates caffeoyl-CoA to feruloyl-CoA and 5-hydroxyferuloyl-CoA to sinapoyl-CoA. Plays a role in the synthesis of feruloylated polysaccharides. Involved in the reinforcement of the plant cell wall. Also involved in the responding to wounding or pathogen challenge by the increased formation of cell wall-bound ferulic acid polymers. The protein is Probable caffeoyl-CoA O-methyltransferase of Pinus pinaster (Maritime pine).